Here is a 299-residue protein sequence, read N- to C-terminus: Mitochondrial magnesium exporter 1 (299 aa).

3 Solcar repeats span residues 12–103, 112–200, and 210–296; these read SNPV…GKRL, LTYP…LQEL, and ISTT…TNDL. The next 4 membrane-spanning stretches (helical) occupy residues 79–99, 114–134, 216–236, and 272–292; these read ISAP…VYAA, YPQI…VTVP, ILSG…FDVL, and ILPI…GVEL.

This sequence belongs to the mitochondrial carrier (TC 2.A.29) family.

It is found in the mitochondrion membrane. Its function is as follows. Mediates efflux of magnesium ions from mitochondria, suggesting a role in magnesium homeostasis. This is Mitochondrial magnesium exporter 1 from Drosophila melanogaster (Fruit fly).